The chain runs to 125 residues: Holo-[acyl-carrier-protein] synthase (125 aa).

Mg(2+) is bound by residues Asp-8 and Glu-57.

The protein belongs to the P-Pant transferase superfamily. AcpS family. Requires Mg(2+) as cofactor.

It is found in the cytoplasm. The catalysed reaction is apo-[ACP] + CoA = holo-[ACP] + adenosine 3',5'-bisphosphate + H(+). Functionally, transfers the 4'-phosphopantetheine moiety from coenzyme A to a Ser of acyl-carrier-protein. The polypeptide is Holo-[acyl-carrier-protein] synthase (Geotalea daltonii (strain DSM 22248 / JCM 15807 / FRC-32) (Geobacter daltonii)).